Here is an 87-residue protein sequence, read N- to C-terminus: MERTNNRKVLTGRVVSDKMDKTIVVTVETKVKHKLYGKRVNYSKKYKTHDENNTAKIGDVVRIQETRPLSKDKRFRLVEVVEKAVII.

This sequence belongs to the universal ribosomal protein uS17 family. In terms of assembly, part of the 30S ribosomal subunit.

In terms of biological role, one of the primary rRNA binding proteins, it binds specifically to the 5'-end of 16S ribosomal RNA. This Exiguobacterium sibiricum (strain DSM 17290 / CCUG 55495 / CIP 109462 / JCM 13490 / 255-15) protein is Small ribosomal subunit protein uS17.